Reading from the N-terminus, the 360-residue chain is 3-dehydroquinate synthase (360 aa).

Residues 69 to 74 (DGEKYK), 103 to 107 (GVVGD), 127 to 128 (TT), K140, K149, and 167 to 170 (TLDT) each bind NAD(+). Zn(2+)-binding residues include E182, H246, and H263.

It belongs to the sugar phosphate cyclases superfamily. Dehydroquinate synthase family. It depends on Co(2+) as a cofactor. The cofactor is Zn(2+). NAD(+) is required as a cofactor.

The protein localises to the cytoplasm. The enzyme catalyses 7-phospho-2-dehydro-3-deoxy-D-arabino-heptonate = 3-dehydroquinate + phosphate. The protein operates within metabolic intermediate biosynthesis; chorismate biosynthesis; chorismate from D-erythrose 4-phosphate and phosphoenolpyruvate: step 2/7. Its function is as follows. Catalyzes the conversion of 3-deoxy-D-arabino-heptulosonate 7-phosphate (DAHP) to dehydroquinate (DHQ). The protein is 3-dehydroquinate synthase of Vesicomyosocius okutanii subsp. Calyptogena okutanii (strain HA).